The sequence spans 202 residues: Thymidylate kinase (202 aa).

Residue 7–14 participates in ATP binding; it reads GIDGSGKT.

This sequence belongs to the thymidylate kinase family.

The catalysed reaction is dTMP + ATP = dTDP + ADP. Functionally, phosphorylation of dTMP to form dTDP in both de novo and salvage pathways of dTTP synthesis. The chain is Thymidylate kinase from Ehrlichia canis (strain Jake).